The primary structure comprises 351 residues: Large ribosomal subunit protein uL3 (351 aa).

Disordered regions lie at residues 1 to 31 and 246 to 271; these read MGHR…TPRT and KGSR…GQLG.

The protein belongs to the universal ribosomal protein uL3 family. As to quaternary structure, part of the 50S ribosomal subunit. Forms a cluster with proteins L14 and L24e.

Functionally, one of the primary rRNA binding proteins, it binds directly near the 3'-end of the 23S rRNA, where it nucleates assembly of the 50S subunit. In Saccharolobus solfataricus (strain ATCC 35092 / DSM 1617 / JCM 11322 / P2) (Sulfolobus solfataricus), this protein is Large ribosomal subunit protein uL3.